Here is a 223-residue protein sequence, read N- to C-terminus: Serine/threonine/tyrosine-interacting protein (223 aa).

Positions 28–176 constitute a Tyrosine-protein phosphatase domain; it reads EMQEVLPGLF…LQEYEAIYLA (149 aa). The Interaction with FBXW7 motif lies at 76–78; that stretch reads FQQ. S184 and S201 each carry phosphoserine. Residues 199-223 form a disordered region; that stretch reads TGSVKRTHEEDDDFGNMQVATAQNG.

It belongs to the protein-tyrosine phosphatase family. Non-receptor class subfamily. Interacts with MAPK1; independently of MAPK1 phosphorylation status. Interacts with CARHSP1/Crhsp-24. Interacts (via FQQ motif) with FBXW7 (via F-box domain); the interaction is direct and prevents FBXW7 interaction with SKP1, a component of the SCF(FBXW7) complex. As to expression, widely expressed with highest levels in muscle, testis and brain. In testis, expression starts 13-14 days after birth and is limited to the seminiferous tubule and to round and elongating spermatids. Expression is low in condensing spermatids and pachytene spermatocytes, and absent in spermatogonia, spermatozoa and somatic Sertoli cells.

Its subcellular location is the nucleus. It localises to the cytoplasm. It is found in the cytosol. Its function is as follows. Catalytically inactive phosphatase. Acts as a nuclear anchor for MAPK1/MAPK3 (ERK1/ERK2). Modulates cell-fate decisions and cell migration by spatiotemporal regulation of MAPK1/MAPK3 (ERK1/ERK2). By binding to the F-box of FBXW7, prevents the assembly of FBXW7 into the SCF E3 ubiquitin-protein ligase complex, and thereby inhibits degradation of its substrates. Plays a role in spermatogenesis. The sequence is that of Serine/threonine/tyrosine-interacting protein from Mus musculus (Mouse).